We begin with the raw amino-acid sequence, 355 residues long: UDP-N-acetylglucosamine--N-acetylmuramyl-(pentapeptide) pyrophosphoryl-undecaprenol N-acetylglucosamine transferase (355 aa).

Residues threonine 15 to glycine 17, asparagine 127, arginine 163, serine 191, isoleucine 244, alanine 263 to glutamate 268, and glutamine 288 each bind UDP-N-acetyl-alpha-D-glucosamine.

The protein belongs to the glycosyltransferase 28 family. MurG subfamily.

It localises to the cell inner membrane. The catalysed reaction is di-trans,octa-cis-undecaprenyl diphospho-N-acetyl-alpha-D-muramoyl-L-alanyl-D-glutamyl-meso-2,6-diaminopimeloyl-D-alanyl-D-alanine + UDP-N-acetyl-alpha-D-glucosamine = di-trans,octa-cis-undecaprenyl diphospho-[N-acetyl-alpha-D-glucosaminyl-(1-&gt;4)]-N-acetyl-alpha-D-muramoyl-L-alanyl-D-glutamyl-meso-2,6-diaminopimeloyl-D-alanyl-D-alanine + UDP + H(+). It participates in cell wall biogenesis; peptidoglycan biosynthesis. Functionally, cell wall formation. Catalyzes the transfer of a GlcNAc subunit on undecaprenyl-pyrophosphoryl-MurNAc-pentapeptide (lipid intermediate I) to form undecaprenyl-pyrophosphoryl-MurNAc-(pentapeptide)GlcNAc (lipid intermediate II). The sequence is that of UDP-N-acetylglucosamine--N-acetylmuramyl-(pentapeptide) pyrophosphoryl-undecaprenol N-acetylglucosamine transferase from Cronobacter sakazakii (strain ATCC BAA-894) (Enterobacter sakazakii).